A 236-amino-acid chain; its full sequence is Ubiquinone biosynthesis O-methyltransferase (236 aa).

The S-adenosyl-L-methionine site is built by R39, G59, D80, and M124.

Belongs to the methyltransferase superfamily. UbiG/COQ3 family.

It catalyses the reaction a 3-demethylubiquinol + S-adenosyl-L-methionine = a ubiquinol + S-adenosyl-L-homocysteine + H(+). The enzyme catalyses a 3-(all-trans-polyprenyl)benzene-1,2-diol + S-adenosyl-L-methionine = a 2-methoxy-6-(all-trans-polyprenyl)phenol + S-adenosyl-L-homocysteine + H(+). Its pathway is cofactor biosynthesis; ubiquinone biosynthesis. In terms of biological role, O-methyltransferase that catalyzes the 2 O-methylation steps in the ubiquinone biosynthetic pathway. The polypeptide is Ubiquinone biosynthesis O-methyltransferase (Shewanella putrefaciens (strain CN-32 / ATCC BAA-453)).